We begin with the raw amino-acid sequence, 161 residues long: Dihydrofolate reductase (161 aa).

Positions 2-161 (NISLIAAISK…YNYSFEILSR (160 aa)) constitute a DHFR domain. 6–8 (IAA) is a binding site for substrate. NADP(+)-binding positions include 7 to 8 (AA) and 15 to 20 (IGYKNK). Aspartate 28 is a binding site for substrate. 44 to 47 (GRLT) is a binding site for NADP(+). Arginine 59 is a substrate binding site. NADP(+) contacts are provided by residues 64–66 (ISS) and 96–101 (IGGAKI). Threonine 115 provides a ligand contact to substrate.

Belongs to the dihydrofolate reductase family.

It carries out the reaction (6S)-5,6,7,8-tetrahydrofolate + NADP(+) = 7,8-dihydrofolate + NADPH + H(+). It functions in the pathway cofactor biosynthesis; tetrahydrofolate biosynthesis; 5,6,7,8-tetrahydrofolate from 7,8-dihydrofolate: step 1/1. Key enzyme in folate metabolism. Catalyzes an essential reaction for de novo glycine and purine synthesis, and for DNA precursor synthesis. In Buchnera aphidicola subsp. Acyrthosiphon pisum (strain APS) (Acyrthosiphon pisum symbiotic bacterium), this protein is Dihydrofolate reductase (folA).